Consider the following 446-residue polypeptide: D(3) dopamine receptor (446 aa).

The Extracellular segment spans residues 1–32 (MAPLSQISSHINSTCGAENSTGVNRARPHAYY). Residues asparagine 12 and asparagine 19 are each glycosylated (N-linked (GlcNAc...) asparagine). Residues 33 to 55 (ALSYCALILAIIFGNGLVCAAVL) form a helical membrane-spanning segment. Residues 56 to 65 (RERALQTTTN) are Cytoplasmic-facing. A helical membrane pass occupies residues 66–88 (YLVVSLAVADLLVATLVMPWVVY). Over 89–104 (LEVTGGVWNFSRICCD) the chain is Extracellular. N-linked (GlcNAc...) asparagine glycosylation is present at asparagine 97. A disulfide bridge links cysteine 103 with cysteine 181. Residues 105-126 (VFVTLDVMMCTASILNLCAISI) traverse the membrane as a helical segment. At 127–149 (DRYTAVVMPVHYQHGTGQSSCRR) the chain is on the cytoplasmic side. A helical membrane pass occupies residues 150 to 170 (VALMITAVWVLAFAVSCPLLF). The Extracellular segment spans residues 171 to 187 (GFNTTGDPSICSISNPD). Asparagine 173 carries N-linked (GlcNAc...) asparagine glycosylation. Residues 188 to 209 (FVIYSSVVSFYVPFGVTVLVYA) traverse the membrane as a helical segment. The Cytoplasmic segment spans residues 210–375 (RIYMVLRQRR…VPLREKKATQ (166 aa)). The helical transmembrane segment at 376–397 (MVVIVLGAFIVCWLPFFLTHVL) threads the bilayer. The Extracellular portion of the chain corresponds to 398-412 (NTHCQACHVSPELYR). Cysteine 401 and cysteine 404 are joined by a disulfide. A helical membrane pass occupies residues 413–432 (ATTWLGYVNSALNPVIYTTF). Over 433-446 (NIEFRKAFLKILSC) the chain is Cytoplasmic.

It belongs to the G-protein coupled receptor 1 family. In terms of assembly, interacts with CLIC6. Interacts with GRK4. Interacts with PALM. Interacts with FLNA (via filamin repeat 21); increases PKA-mediated phosphorylation of FLNA. Post-translationally, phosphorylated by GRK4. In terms of processing, palmitoylated.

The protein resides in the cell membrane. In terms of biological role, dopamine receptor whose activity is mediated by G proteins which inhibit adenylyl cyclase. Promotes cell proliferation. The chain is D(3) dopamine receptor (Drd3) from Mus musculus (Mouse).